Reading from the N-terminus, the 416-residue chain is D-amino acid dehydrogenase (416 aa).

Ile-3–Tyr-17 lines the FAD pocket.

The protein belongs to the DadA oxidoreductase family. Requires FAD as cofactor.

The catalysed reaction is a D-alpha-amino acid + A + H2O = a 2-oxocarboxylate + AH2 + NH4(+). It functions in the pathway amino-acid degradation; D-alanine degradation; NH(3) and pyruvate from D-alanine: step 1/1. Functionally, oxidative deamination of D-amino acids. The polypeptide is D-amino acid dehydrogenase (Brucella canis (strain ATCC 23365 / NCTC 10854 / RM-666)).